Here is a 201-residue protein sequence, read N- to C-terminus: Large ribosomal subunit protein bL12m (201 aa).

A mitochondrion-targeting transit peptide spans 1–38 (MLPVAASRCLWGPRLGLRGAALRLARQQMPSVCAARQL). Disordered regions lie at residues 37 to 60 (QLRS…APKE) and 109 to 130 (VSAA…QKER). N6-acetyllysine is present on residues lysine 128, lysine 141, lysine 145, and lysine 147. Position 153 is an N6-acetyllysine; alternate (lysine 153). Lysine 153 bears the N6-succinyllysine; alternate mark. Residue lysine 153 forms a Glycyl lysine isopeptide (Lys-Gly) (interchain with G-Cter in ubiquitin) linkage. Lysine 165 is modified (N6-succinyllysine). An N6-acetyllysine mark is found at lysine 166 and lysine 176. Lysine 181 is subject to N6-acetyllysine; alternate. At lysine 181 the chain carries N6-succinyllysine; alternate. N6-acetyllysine is present on lysine 188.

This sequence belongs to the bacterial ribosomal protein bL12 family. As to quaternary structure, component of the mitochondrial ribosome large subunit (39S) which comprises a 16S rRNA and about 50 distinct proteins. Interacts with NOA1. Two mature forms are produced by differential two-step proteolytic cleavage. Cleaved by the mitochondrial processing protease to produce the long mature form and subsequently by the mitochondrial intermediate protease to produce the short mature form. Post-translationally, in the presence of CUL3, undergoes 'Lys-63'-linked ubiquitination at Lys-153 which results in proteasomal degradation.

The protein resides in the mitochondrion matrix. As a component of the mitochondrial large ribosomal subunit, plays a role in mitochondrial translation. When present in mitochondria as a free protein not associated with the ribosome, associates with mitochondrial RNA polymerase POLRMT to activate transcription. Required for POLRMT stability. The polypeptide is Large ribosomal subunit protein bL12m (Mrpl12) (Mus musculus (Mouse)).